The primary structure comprises 479 residues: MAIERQVTEAEEPVSPFARLFSLPGLDVFNIVTIGCKTEGNASTIVEGIKNTLINHPRFSSILVTGHGEHKGKARWIPTKINVEEHVIVPDIDPNIENPDEFLEDYTSNMALSPMDMSKPLWEFHLLKLKTSHAEAVTVARFHHSLGDGMSLMSLLLACTRKTCDPEAFPTFVAPKKNKAKNVCFSLVAWLWFIVRLMFHTCVEVIKSIVFICRASDTSAHIMGKPGATLSANKFIHRIISLDDVKMVKNAMNMTVNDVLFGMVQAGLSRYLNQRYDLETSSKSRKNLHNIGLHGVVFFNLRPNRNIEDLAKMMAKGSKCRWGNSIGYVLIPLGMKPQDDVFEYVRQAKTIMDGKKHSLEPLFSYGLLKVTMEVFGLRGLKTLVKRIFGSTTMIFSNVVGPDEEISFFGHRIAYIAASTFGVPQALNICIQSYVDKLIINIGVDVDVIPDPHHLCDLIIEALRMMNSAAPKKVFHASKV.

Topologically, residues methionine 1–asparagine 182 are cytoplasmic. Histidine 144 (proton acceptor) is an active-site residue. The chain crosses the membrane as a helical span at residues valine 183–phenylalanine 199. Residues histidine 200–valine 479 are Lumenal-facing. Asparagine 253 carries an N-linked (GlcNAc...) asparagine glycan.

It in the N-terminal section; belongs to the long-chain O-acyltransferase family. Mostly expressed in flowers and siliques and barely in roots and stems.

The protein resides in the cell membrane. Its subcellular location is the endoplasmic reticulum membrane. It carries out the reaction an acyl-CoA + a 1,2-diacyl-sn-glycerol = a triacyl-sn-glycerol + CoA. The catalysed reaction is a long chain fatty alcohol + a fatty acyl-CoA = a wax ester + CoA. The protein operates within glycerolipid metabolism; triacylglycerol biosynthesis. It functions in the pathway lipid metabolism. Bifunctional wax ester synthase/diacylglycerol acyltransferase. Involved in cuticular wax biosynthesis. The polypeptide is Wax ester synthase/diacylglycerol acyltransferase 2 (Arabidopsis thaliana (Mouse-ear cress)).